The following is a 1413-amino-acid chain: MKALLDLFKQVQQEEVFDAIKIGLASPDKIRSWSFGEVKKPETINYRTFKPERDGLFCAKIFGPIKDYECLCGKYKRLKHRGVICEKCGVEVTLAKVRRERMGHIELASPVAHIWFLKSLPSRLGMVLDMTLRDIERVLYFEAYVVIDPGMTPLKARQIMTEEDYYNKVEEYGDEFRAEMGAEGVRELLRAINIDEQVEQLRTELKNTGSEAKIKKYAKRLKVLEAFQRSGIKPEWMILEVLPVLPPELRPLVPLDGGRFATSDLNDLYRRVINRNNRLKRLLELKAPEIIVRNEKRMLQEAVDSLLDNGRRGKAMTGANKRPLKSLADMIKGKGGRFRQNLLGKRVDYSGRSVIVVGPTLKLHQCGLPKLMALELFKPFIFNKLEVMGVATTIKAAKKEVENQTPVVWDILEEVIREHPVMLNRAPTLHRLGIQAFEPVLIEGKAIQLHPLVCAAFNADFDGDQMAVHVPLSLEAQMEARTLMLASNNVLFPANGDPSIVPSQDIVLGLYYATREAINGKGEGLTFTGVSEVIRAYENKEVELASRVNVRITEMVRNEDKSEGAPEFVPKISLYATTVGRAILSEILPPGLPFSVLNKPLKKKEISRLINTAFRKCGLRATVVFADQLMQSGFRLATRAGISICVDDMLVPPQKETIVGDAAKKVKEYDRQYMSGLVTAQERYNNVVDIWSATSEAVGKAMMEQLSTEPVIDRDGNETRQESFNSIYMMADSGARGSAVQIRQLAGMRGLMAKPDGSIIETPITANFREGLNVLQYFISTHGARKGLADTALKTANSGYLTRRLVDVTQDLVVVEDDCGTSNGVAMKALVEGGEVVEALRDRILGRVAVADVVNPETQETLYEAGTLLDETAVEEIERLGIDEVRVRTPLTCETRYGLCASCYGRDLGRGTLVNVGEAVGVIAAQSIGEPGTQLTMRTFHIGGAASRAAVASSVEAKSNGTVRFSPSMRYVTNAKGEQIVISRSGEALITDDIGRERERHKIPYGATLLQLDGAAIKAGTQLATWDPMTRPIITEYGGTVKFENVEEGVTVAKQIDDVTGLSTLVVIDAKRRGSQASKSVRPQVKLLDANGDEVKIPGTEHSVQIGFQVGALITVKDGQQVQVGEVLARIPTESQKTRDITGGLPRVAELFEARSPKDAGILAEVTGTVSFGKDTKGKQRLVITDLEGNQHEFLIAKEKQVLVHDGQVVNKGEMIVDGPADPHDILRLQGIEALSRYIVDEVQDVYRLQGVKINDKHIEVIVRQMLRRVQITDNGDSRFIPGEQVERSDMLDENDRMIAEGKRPASYENVLLGITKASLSTDSFISAASFQETTRVLTEAAIMGKRDDLRGLKENVIVGRLIPAGTGLAFHKARKAKEMSDRERFDQIAAEEAFDFGTPSTPAEEPQHPAAE.

Zn(2+)-binding residues include C70, C72, C85, and C88. Mg(2+)-binding residues include D460, D462, and D464. Positions 819, 893, 900, and 903 each coordinate Zn(2+).

Belongs to the RNA polymerase beta' chain family. In terms of assembly, the RNAP catalytic core consists of 2 alpha, 1 beta, 1 beta' and 1 omega subunit. When a sigma factor is associated with the core the holoenzyme is formed, which can initiate transcription. The cofactor is Mg(2+). Requires Zn(2+) as cofactor.

The enzyme catalyses RNA(n) + a ribonucleoside 5'-triphosphate = RNA(n+1) + diphosphate. Functionally, DNA-dependent RNA polymerase catalyzes the transcription of DNA into RNA using the four ribonucleoside triphosphates as substrates. The sequence is that of DNA-directed RNA polymerase subunit beta' from Burkholderia multivorans (strain ATCC 17616 / 249).